The chain runs to 963 residues: Thrombospondin-4 (963 aa).

The signal sequence occupies residues 1-26; sequence MPAPRAAAAAFLLLHLVLQPWQRTSA. Residues 29-194 enclose the Laminin G-like domain; that stretch reads TPQVFDLLPS…LEELKLVVRG (166 aa). The Cell attachment site signature appears at 138 to 140; it reads RGD. The region spanning 288–327 is the EGF-like 1 domain; that stretch reads PTRHCDSSPCFRGVRCTDTRDGFQCGPCPDGYTGNGITCS. 21 cysteine pairs are disulfide-bonded: cysteine 292–cysteine 303, cysteine 297–cysteine 312, cysteine 315–cysteine 326, cysteine 332–cysteine 343, cysteine 337–cysteine 352, cysteine 355–cysteine 379, cysteine 385–cysteine 396, cysteine 390–cysteine 405, cysteine 408–cysteine 420, cysteine 426–cysteine 440, cysteine 434–cysteine 450, cysteine 452–cysteine 463, cysteine 479–cysteine 484, cysteine 489–cysteine 509, cysteine 525–cysteine 545, cysteine 548–cysteine 568, cysteine 584–cysteine 604, cysteine 607–cysteine 627, cysteine 645–cysteine 665, cysteine 685–cysteine 705, and cysteine 721–cysteine 942. The EGF-like 2; calcium-binding domain maps to 328-365; sequence DVDECKYHPCYPGVRCVNLAPGFRCDACPVGFTGPMVQ. The EGF-like 3; calcium-binding domain maps to 381-418; that stretch reads DVDECQNGACVLNSICINTLGSYRCGPCKPGYTGDQTR. In terms of domain architecture, EGF-like 4 spans 422–464; sequence TERSCRNPEQNPCSVHAQCIEERQGDVTCVCGVGWAGDGYVCG. 8 TSP type-3 repeats span residues 465–497, 498–533, 534–556, 557–592, 593–615, 616–653, 654–693, and 694–729; these read KDVDIDSYPDEELPCSARNCKKDNCKYVPNSGQ, EDADRDGIGDACDEDADGDGILNEQDNCVLTHNIDQ, RNSDKDIFGDACDNCRMVLNNDQ, KDTDGDGRGDACDDDMDGDGIKNILDNCPRVPNRDQ, QDRDGDDVGDACDSCPDVSNPNQ, SDVDNDLVGDSCDTNQDSDGDGHQDSTDNCPTVINSSQ, LDTDKDGIGDECDDDDDNDGIPDLVPPGPDNCRLVPNPAQ, and EDSNNDGVGDICEADFDQDQVIDHIDVCPENAEITL. The Cell attachment site signature appears at 564–566; sequence RGD. The tract at residues 579-676 is disordered; sequence NILDNCPRVP…DDDDNDGIPD (98 aa). Asparagine 614 and asparagine 650 each carry an N-linked (GlcNAc...) asparagine glycan. The span at 642–654 shows a compositional bias: polar residues; the sequence is TDNCPTVINSSQL. Residues 662–673 are compositionally biased toward acidic residues; sequence GDECDDDDDNDG. The TSP C-terminal domain occupies 733 to 947; the sequence is RAYQTVVLDP…LKYRCNDTIP (215 aa). An N-linked (GlcNAc...) asparagine glycan is attached at asparagine 943.

The protein belongs to the thrombospondin family. As to quaternary structure, homopentamer; disulfide-linked. Interacts with PTBP3. Interacts (via EGF-like 3; calcium-binding domain) with ATF6 and facilitates its processing, activation and nuclear translocation. Interacts with NOTCH1. As to expression, heart. Up-regulated in the heart in response to ischemic injury and pathology (at protein level). Astrocytes; expressed at high levels in subventricular zone (SVZ)-derived astrocytes and at low levels in cortical astrocytes. In response to peripheral nerve injury, significantly up-regulated in the dorsal spinal cord (at protein level).

Its subcellular location is the endoplasmic reticulum. It localises to the sarcoplasmic reticulum. The protein resides in the secreted. The protein localises to the extracellular space. It is found in the extracellular matrix. Adhesive glycoprotein that mediates cell-to-cell and cell-to-matrix interactions and is involved in various processes including cellular proliferation, migration, adhesion and attachment, inflammatory response to CNS injury, regulation of vascular inflammation and adaptive responses of the heart to pressure overload and in myocardial function and remodeling. Binds to structural extracellular matrix (ECM) proteins and modulates the ECM in response to tissue damage, contributing to cardioprotective and adaptive ECM remodeling. Plays a role in ER stress response, via its interaction with the activating transcription factor 6 alpha (ATF6) which produces adaptive ER stress response factors and protects myocardium from pressure overload. May contribute to spinal presynaptic hypersensitivity and neuropathic pain states after peripheral nerve injury. May play a role in regulating protective astrogenesis from the subventricular zone (SVZ) niche after injury in a NOTCH1-dependent manner. This Mus musculus (Mouse) protein is Thrombospondin-4 (Thbs4).